The chain runs to 514 residues: ATP synthase subunit alpha (514 aa).

Position 170-177 (170-177 (GDRQTGKT)) interacts with ATP.

It belongs to the ATPase alpha/beta chains family. In terms of assembly, F-type ATPases have 2 components, CF(1) - the catalytic core - and CF(0) - the membrane proton channel. CF(1) has five subunits: alpha(3), beta(3), gamma(1), delta(1), epsilon(1). CF(0) has three main subunits: a(1), b(2) and c(9-12). The alpha and beta chains form an alternating ring which encloses part of the gamma chain. CF(1) is attached to CF(0) by a central stalk formed by the gamma and epsilon chains, while a peripheral stalk is formed by the delta and b chains.

The protein resides in the cell inner membrane. The enzyme catalyses ATP + H2O + 4 H(+)(in) = ADP + phosphate + 5 H(+)(out). Its function is as follows. Produces ATP from ADP in the presence of a proton gradient across the membrane. The alpha chain is a regulatory subunit. The polypeptide is ATP synthase subunit alpha (Psychrobacter sp. (strain PRwf-1)).